Consider the following 332-residue polypeptide: Glyceraldehyde-3-phosphate dehydrogenase (332 aa).

Residues 11–12 (RI), Asp34, Arg78, and Ser120 contribute to the NAD(+) site. D-glyceraldehyde 3-phosphate is bound by residues 151–153 (SCT), Thr182, Arg197, 210–211 (TG), and Arg233. Cys152 acts as the Nucleophile in catalysis. Asn314 serves as a coordination point for NAD(+).

The protein belongs to the glyceraldehyde-3-phosphate dehydrogenase family. Homotetramer.

It localises to the cytoplasm. The enzyme catalyses D-glyceraldehyde 3-phosphate + phosphate + NAD(+) = (2R)-3-phospho-glyceroyl phosphate + NADH + H(+). It participates in carbohydrate degradation; glycolysis; pyruvate from D-glyceraldehyde 3-phosphate: step 1/5. Functionally, catalyzes the oxidative phosphorylation of glyceraldehyde 3-phosphate (G3P) to 1,3-bisphosphoglycerate (BPG) using the cofactor NAD. The first reaction step involves the formation of a hemiacetal intermediate between G3P and a cysteine residue, and this hemiacetal intermediate is then oxidized to a thioester, with concomitant reduction of NAD to NADH. The reduced NADH is then exchanged with the second NAD, and the thioester is attacked by a nucleophilic inorganic phosphate to produce BPG. The chain is Glyceraldehyde-3-phosphate dehydrogenase (gap) from Kitasatospora aureofaciens (Streptomyces aureofaciens).